The chain runs to 278 residues: Glycyl-dTMP PLP-dependent decarboxylase (278 aa).

The protein belongs to the pyridoxal-phosphate-dependent aminodecarboxylase family.

It carries out the reaction 5-C(alpha)-glycyl-dTMP in DNA + H(+) = 5-aminoethyl-dUMP in DNA + CO2. In terms of biological role, converts 5-Calpha-glycinylthymidine (Calpha-GlyT) into 5-aminoethyl-2'-deoxyuridine (5-NedU) as a step in the pathway leading to thymidine hypermodifications in the viral genome. As a final result of the pathway of hypermodification, 5-aminoethyl-2'-deoxyuridine (5-NedU) substitutes for about 30% of thymidines in the viral DNA. These modifications probably prevent degradation of viral genome by the host restriction-modification antiviral defense system. The protein is Glycyl-dTMP PLP-dependent decarboxylase of Pseudomonas aeruginosa.